A 1261-amino-acid chain; its full sequence is SNF2 domain-containing protein CLASSY 2 (1261 aa).

The segment at 458 to 479 (FQKRTSRSSRSVAPKTEDSDEP) is disordered. The 201-residue stretch at 704–904 (DPTSGNIGGC…FNTLCLARPK (201 aa)) folds into the Helicase ATP-binding domain. ATP is bound at residue 717–724 (HSPGAGKT). The DEAH box motif lies at 855–858 (DEGH). One can recognise a Helicase C-terminal domain in the interval 1067–1232 (FVLNLIFRVV…DPSLWQAEKI (166 aa)).

The protein belongs to the helicase family. In terms of assembly, interacts with NRPD1 and SHH1.

The protein resides in the nucleus. In terms of biological role, probable chromatin remodeling factor. This is SNF2 domain-containing protein CLASSY 2 (CLSY2) from Arabidopsis thaliana (Mouse-ear cress).